The sequence spans 67 residues: Light-harvesting protein B-870 alpha chain (67 aa).

Position 1 is an N-formylmethionine; in strain DSM 149 and DSM 151 (Met1). The Cytoplasmic segment spans residues 1-12 (MWRIWRLFDPMR). Residues 13 to 33 (AMVAQAVFLLGLAVLIHLMLL) form a helical membrane-spanning segment. Residue His29 coordinates a bacteriochlorophyll. Topologically, residues 34 to 67 (GTNKYNWLDGAKKAPAATAVAPVPAEVTSLAQAK) are periplasmic.

It belongs to the antenna complex alpha subunit family. An alpha/beta heterodimer. The core complex is formed by different alpha and beta chains, binding bacteriochlorophyll molecules, and arranged most probably in tetrameric structures disposed around the reaction center. The non-pigmented gamma chains may constitute additional components. In terms of processing, the N-terminus is blocked.

The protein localises to the cell inner membrane. Functionally, antenna complexes are light-harvesting systems, which transfer the excitation energy to the reaction centers. This Rubrivivax gelatinosus (Rhodocyclus gelatinosus) protein is Light-harvesting protein B-870 alpha chain (pufA).